A 186-amino-acid polypeptide reads, in one-letter code: Adenine phosphoribosyltransferase (186 aa).

This sequence belongs to the purine/pyrimidine phosphoribosyltransferase family. In terms of assembly, homodimer.

It is found in the cytoplasm. It carries out the reaction AMP + diphosphate = 5-phospho-alpha-D-ribose 1-diphosphate + adenine. Its pathway is purine metabolism; AMP biosynthesis via salvage pathway; AMP from adenine: step 1/1. In terms of biological role, catalyzes a salvage reaction resulting in the formation of AMP, that is energically less costly than de novo synthesis. The sequence is that of Adenine phosphoribosyltransferase from Xanthomonas campestris pv. campestris (strain 8004).